The primary structure comprises 154 residues: uncharacterized protein (154 aa).

Its function is as follows. This protein may be involved in virus assembly. Essential for virus function. This is an uncharacterized protein from Saccharolobus solfataricus (Sulfolobus solfataricus).